The chain runs to 547 residues: Chaperonin GroEL (547 aa).

ATP contacts are provided by residues 29–32, 86–90, Gly-413, 479–481, and Asp-495; these read TLGP, DGTTT, and NAA.

The protein belongs to the chaperonin (HSP60) family. In terms of assembly, forms a cylinder of 14 subunits composed of two heptameric rings stacked back-to-back. Interacts with the co-chaperonin GroES.

The protein localises to the cytoplasm. It carries out the reaction ATP + H2O + a folded polypeptide = ADP + phosphate + an unfolded polypeptide.. Functionally, together with its co-chaperonin GroES, plays an essential role in assisting protein folding. The GroEL-GroES system forms a nano-cage that allows encapsulation of the non-native substrate proteins and provides a physical environment optimized to promote and accelerate protein folding. The sequence is that of Chaperonin GroEL from Synechococcus sp. (strain RCC307).